A 50-amino-acid polypeptide reads, in one-letter code: Mast cell degranulating peptide (50 aa).

Residues 1–27 (MISMLRCTFFFVSVILITSYFVTPTMS) form the signal peptide. An N6-formyllysine modification is found at Lys29. Cysteines 30 and 42 form a disulfide. Lys44 and Lys48 each carry N6-formyllysine. Position 49 is an asparagine amide (Asn49).

In terms of tissue distribution, expressed by the venom gland.

The protein resides in the secreted. Functionally, potent anti-inflammatory agent. At low concentrations, mediates the degranulation of mast cells thus evoking an inflammatory response. Also acts as a neurotoxin capable of blocking a class of voltage-gated potassium channels. This is Mast cell degranulating peptide from Apis cerana cerana (Oriental honeybee).